The primary structure comprises 504 residues: Cytochrome P450 7A1 (504 aa).

Residues 4-24 (TSLIWGIAIAACCCLWLILGI) traverse the membrane as a helical segment. Cysteine 444 is a binding site for heme.

It belongs to the cytochrome P450 family. Heme is required as a cofactor. Detected in liver.

It localises to the endoplasmic reticulum membrane. Its subcellular location is the microsome membrane. The enzyme catalyses cholesterol + reduced [NADPH--hemoprotein reductase] + O2 = 7alpha-hydroxycholesterol + oxidized [NADPH--hemoprotein reductase] + H2O + H(+). It carries out the reaction 4beta-hydroxycholesterol + reduced [NADPH--hemoprotein reductase] + O2 = 4beta,7alpha-dihydroxycholesterol + oxidized [NADPH--hemoprotein reductase] + H2O + H(+). The catalysed reaction is lathosterol + reduced [NADPH--hemoprotein reductase] + O2 = 7alpha,8alpha-epoxy-5alpha-cholestan-3beta-ol + oxidized [NADPH--hemoprotein reductase] + H2O + H(+). It catalyses the reaction lathosterol + reduced [NADPH--hemoprotein reductase] + O2 = 5alpha-cholestan-7-oxo-3beta-ol + oxidized [NADPH--hemoprotein reductase] + H2O + H(+). The enzyme catalyses 7-dehydrocholesterol + reduced [NADPH--hemoprotein reductase] + O2 = 7-oxocholesterol + oxidized [NADPH--hemoprotein reductase] + H2O + H(+). It carries out the reaction (24S)-hydroxycholesterol + reduced [NADPH--hemoprotein reductase] + O2 = (24S)-7alpha-dihydroxycholesterol + oxidized [NADPH--hemoprotein reductase] + H2O + H(+). The catalysed reaction is (24R)-hydroxycholesterol + reduced [NADPH--hemoprotein reductase] + O2 = (24R)-7alpha-dihydroxycholesterol + oxidized [NADPH--hemoprotein reductase] + H2O + H(+). The protein operates within lipid metabolism; bile acid biosynthesis. Its pathway is steroid metabolism; cholesterol degradation. Its function is as follows. A cytochrome P450 monooxygenase involved in the metabolism of endogenous cholesterol and its oxygenated derivatives (oxysterols). Mechanistically, uses molecular oxygen inserting one oxygen atom into a substrate, and reducing the second into a water molecule, with two electrons provided by NADPH via cytochrome P450 reductase (CPR; NADPH-ferrihemoprotein reductase). Functions as a critical regulatory enzyme of bile acid biosynthesis and cholesterol homeostasis. Catalyzes the hydroxylation of carbon hydrogen bond at 7-alpha position of cholesterol, a rate-limiting step in cholesterol catabolism and bile acid biosynthesis. 7-alpha hydroxylates several oxysterols, including 4beta-hydroxycholesterol and 24-hydroxycholesterol. Catalyzes the oxidation of the 7,8 double bond of 7-dehydrocholesterol and lathosterol with direct and predominant formation of the 7-keto derivatives. The sequence is that of Cytochrome P450 7A1 from Homo sapiens (Human).